Consider the following 275-residue polypeptide: Formamidopyrimidine-DNA glycosylase (275 aa).

Pro2 serves as the catalytic Schiff-base intermediate with DNA. The active-site Proton donor is the Glu3. Lys58 serves as the catalytic Proton donor; for beta-elimination activity. DNA is bound by residues His91 and Arg110. The segment at 238–272 adopts an FPG-type zinc-finger fold; sequence QVYGQTGKPCPRCGQAIVKLKVGGRGTHICPKCQK. Residue Arg262 is the Proton donor; for delta-elimination activity of the active site.

It belongs to the FPG family. In terms of assembly, monomer. It depends on Zn(2+) as a cofactor.

The enzyme catalyses Hydrolysis of DNA containing ring-opened 7-methylguanine residues, releasing 2,6-diamino-4-hydroxy-5-(N-methyl)formamidopyrimidine.. It carries out the reaction 2'-deoxyribonucleotide-(2'-deoxyribose 5'-phosphate)-2'-deoxyribonucleotide-DNA = a 3'-end 2'-deoxyribonucleotide-(2,3-dehydro-2,3-deoxyribose 5'-phosphate)-DNA + a 5'-end 5'-phospho-2'-deoxyribonucleoside-DNA + H(+). Functionally, involved in base excision repair of DNA damaged by oxidation or by mutagenic agents. Acts as a DNA glycosylase that recognizes and removes damaged bases. Has a preference for oxidized purines, such as 7,8-dihydro-8-oxoguanine (8-oxoG). Has AP (apurinic/apyrimidinic) lyase activity and introduces nicks in the DNA strand. Cleaves the DNA backbone by beta-delta elimination to generate a single-strand break at the site of the removed base with both 3'- and 5'-phosphates. The chain is Formamidopyrimidine-DNA glycosylase from Streptococcus pyogenes serotype M28 (strain MGAS6180).